Consider the following 313-residue polypeptide: Ribonuclease Z (313 aa).

Residues histidine 62, histidine 64, aspartate 66, histidine 67, histidine 142, aspartate 212, and histidine 270 each coordinate Zn(2+). The active-site Proton acceptor is the aspartate 66.

This sequence belongs to the RNase Z family. Homodimer. It depends on Zn(2+) as a cofactor.

It catalyses the reaction Endonucleolytic cleavage of RNA, removing extra 3' nucleotides from tRNA precursor, generating 3' termini of tRNAs. A 3'-hydroxy group is left at the tRNA terminus and a 5'-phosphoryl group is left at the trailer molecule.. In terms of biological role, zinc phosphodiesterase, which displays some tRNA 3'-processing endonuclease activity. Probably involved in tRNA maturation, by removing a 3'-trailer from precursor tRNA. This Cytophaga hutchinsonii (strain ATCC 33406 / DSM 1761 / CIP 103989 / NBRC 15051 / NCIMB 9469 / D465) protein is Ribonuclease Z.